Reading from the N-terminus, the 615-residue chain is Nuclear receptor subfamily 1 group D member 1 (615 aa).

Residues 1 to 12 are compositionally biased toward polar residues; the sequence is MTTLDSNNNTGG. The segment at 1-70 is required for phosphorylation by CSNK1E and cytoplasmic localization; the sequence is MTTLDSNNNT…TQDPARSFGS (70 aa). Positions 1–120 are disordered; the sequence is MTTLDSNNNT…SSRVSPSKGT (120 aa). The interval 1–129 is modulating; it reads MTTLDSNNNT…TSNITKLNGM (129 aa). Residues 14–34 show a composition bias toward low complexity; it reads ITYIGSSGSSPSRTSPESLYS. Residues 35–48 show a composition bias toward polar residues; that stretch reads DSSNGSFQSLTQGC. Residues 49–285 are crucial for activation of GJA1; sequence PTYFPPSPTG…PPRSPSPEPT (237 aa). Residues S55 and S59 each carry the phosphoserine; by GSK3-beta modification. A compositionally biased stretch (low complexity) spans 70 to 94; the sequence is SAPPSLSDDSSPSSASSSSSSSSSS. The segment at residues 130–206 is a DNA-binding region (nuclear receptor); that stretch reads VLLCKVCGDV…VGMSRDAVRF (77 aa). 2 NR C4-type zinc fingers span residues 133 to 153 and 170 to 194; these read CKVCGDVASGFHYGVHACEGC and CLKNENCSIVRINRNRCQQCRFKKC. An N6-acetyllysine; by KAT5 mark is found at K192 and K193. Disordered regions lie at residues 235 to 286 and 312 to 337; these read LCPL…EPTM and PGNFNANHASGSPSATTPHRWESQGC. The segment covering 240–252 has biased composition (low complexity); sequence TSPTPHPTSGSMG. A compositionally biased stretch (pro residues) spans 253–262; it reads PSPPPAPAPT. T275 bears the Phosphothreonine; by CDK1 mark. One can recognise an NR LBD domain in the interval 285–615; sequence TMEDVISQVA…KLLSFRVDAQ (331 aa). Residues 312–328 are compositionally biased toward polar residues; the sequence is PGNFNANHASGSPSATT. C419 contributes to the heme binding site. The residue at position 592 (K592) is an N6-acetyllysine. H603 contributes to the heme binding site.

It belongs to the nuclear hormone receptor family. NR1 subfamily. In terms of assembly, binds DNA as a monomer or a homodimer. Interacts with NR2E3 and ZNHIT1. Interacts with C1D. Interacts with SP1. Interacts with OPHN1 (via C-terminus). Interacts with PER2; the interaction associates PER2 to BMAL1 promoter region. Interacts with CRY1. Interacts with CCAR2. Interacts with SIAH2. Interacts with FBXW7 and CDK1. Interacts with HUWE1. Interacts with NR0B2. Interacts with NFIL3. Interacts (via domain NR LBD) with HSP90AA1 and HSP90AB1. Ubiquitinated, leading to its proteasomal degradation. Ubiquitinated by the SCF(FBXW7) complex when phosphorylated by CDK1 leading to its proteasomal degradation. Ubiquitinated by SIAH2; leading to its proteasomal degradation. Rapidly ubiquitinated in response to inflammatory triggers and sumoylation is a prerequisite to its ubiquitination. Post-translationally, sumoylated by UBE2I, desumoylated by SENP1, and sumoylation is a prerequisite to its ubiquitination. In terms of processing, phosphorylated by CSNK1E; phosphorylation enhances its cytoplasmic localization. Undergoes lysosome-mediated degradation in a time-dependent manner in the liver. As to expression, expressed during adipocyte differentiation (at protein level). Expressed in skeletal muscle, bladder, lumbar spinal cord, pancreatic islets and hypothalamus. Expressed in developing and adult retina. In the adult retina, predominantly expressed in the outer nuclear layer, where rod and cone cells reside, and also localized to the ganglion cell layer. Expressed in a circadian manner in the liver. Expressed in a circadian manner in the lung with a peak between ZT8 and ZT12.

It is found in the nucleus. The protein localises to the cytoplasm. It localises to the cell projection. Its subcellular location is the dendrite. The protein resides in the dendritic spine. Transcriptional repressor which coordinates circadian rhythm and metabolic pathways in a heme-dependent manner. Integral component of the complex transcription machinery that governs circadian rhythmicity and forms a critical negative limb of the circadian clock by directly repressing the expression of core clock components BMAL1, CLOCK and CRY1. Also regulates genes involved in metabolic functions, including lipid and bile acid metabolism, adipogenesis, gluconeogenesis and the macrophage inflammatory response. Acts as a receptor for heme which stimulates its interaction with the NCOR1/HDAC3 corepressor complex, enhancing transcriptional repression. Recognizes two classes of DNA response elements within the promoter of its target genes and can bind to DNA as either monomers or homodimers, depending on the nature of the response element. Binds as a monomer to a response element composed of the consensus half-site motif 5'-[A/G]GGTCA-3' preceded by an A/T-rich 5' sequence (RevRE), or as a homodimer to a direct repeat of the core motif spaced by two nucleotides (RevDR-2). Acts as a potent competitive repressor of ROR alpha (RORA) function and regulates the levels of its ligand heme by repressing the expression of PPARGC1A, a potent inducer of heme synthesis. Regulates lipid metabolism by repressing the expression of APOC3 and by influencing the activity of sterol response element binding proteins (SREBPs); represses INSIG2 which interferes with the proteolytic activation of SREBPs which in turn govern the rhythmic expression of enzymes with key functions in sterol and fatty acid synthesis. Regulates gluconeogenesis via repression of G6PC1 and PEPCK and adipocyte differentiation via repression of PPARG. Regulates glucagon release in pancreatic alpha-cells via the AMPK-NAMPT-SIRT1 pathway and the proliferation, glucose-induced insulin secretion and expression of key lipogenic genes in pancreatic-beta cells. Positively regulates bile acid synthesis by increasing hepatic expression of CYP7A1 via repression of NR0B2 and NFIL3 which are negative regulators of CYP7A1. Modulates skeletal muscle oxidative capacity by regulating mitochondrial biogenesis and autophagy; controls mitochondrial biogenesis and respiration by interfering with the STK11-PRKAA1/2-SIRT1-PPARGC1A signaling pathway. Represses the expression of SERPINE1/PAI1, an important modulator of cardiovascular disease and the expression of inflammatory cytokines and chemokines in macrophages. Represses gene expression at a distance in macrophages by inhibiting the transcription of enhancer-derived RNAs (eRNAs). Plays a role in the circadian regulation of body temperature and negatively regulates thermogenic transcriptional programs in brown adipose tissue (BAT); imposes a circadian oscillation in BAT activity, increasing body temperature when awake and depressing thermogenesis during sleep. In concert with NR2E3, regulates transcriptional networks critical for photoreceptor development and function. In addition to its activity as a repressor, can also act as a transcriptional activator. In the ovarian granulosa cells acts as a transcriptional activator of STAR which plays a role in steroid biosynthesis. In collaboration with SP1, activates GJA1 transcription in a heme-independent manner. Represses the transcription of CYP2B10, CYP4A10 and CYP4A14. Represses the transcription of CES2. Represses and regulates the circadian expression of TSHB in a NCOR1-dependent manner. Negatively regulates the protein stability of NR3C1 and influences the time-dependent subcellular distribution of NR3C1, thereby affecting its transcriptional regulatory activity. Plays a critical role in the circadian control of neutrophilic inflammation in the lung; under resting, non-stress conditions, acts as a rhythmic repressor to limit inflammatory activity whereas in the presence of inflammatory triggers undergoes ubiquitin-mediated degradation thereby relieving inhibition of the inflammatory response. Plays a key role in the circadian regulation of microglial activation and neuroinflammation; suppresses microglial activation through the NF-kappaB pathway in the central nervous system. Plays a role in the regulation of the diurnal rhythms of lipid and protein metabolism in the skeletal muscle via transcriptional repression of genes controlling lipid and amino acid metabolism in the muscle. The protein is Nuclear receptor subfamily 1 group D member 1 (Nr1d1) of Mus musculus (Mouse).